The following is a 156-amino-acid chain: ATP synthase subunit b (156 aa).

The helical transmembrane segment at 11-31 (AIAFAIFVMFCMKFVWPPLIG) threads the bilayer.

Belongs to the ATPase B chain family. In terms of assembly, F-type ATPases have 2 components, F(1) - the catalytic core - and F(0) - the membrane proton channel. F(1) has five subunits: alpha(3), beta(3), gamma(1), delta(1), epsilon(1). F(0) has three main subunits: a(1), b(2) and c(10-14). The alpha and beta chains form an alternating ring which encloses part of the gamma chain. F(1) is attached to F(0) by a central stalk formed by the gamma and epsilon chains, while a peripheral stalk is formed by the delta and b chains.

The protein localises to the cell inner membrane. Functionally, f(1)F(0) ATP synthase produces ATP from ADP in the presence of a proton or sodium gradient. F-type ATPases consist of two structural domains, F(1) containing the extramembraneous catalytic core and F(0) containing the membrane proton channel, linked together by a central stalk and a peripheral stalk. During catalysis, ATP synthesis in the catalytic domain of F(1) is coupled via a rotary mechanism of the central stalk subunits to proton translocation. Component of the F(0) channel, it forms part of the peripheral stalk, linking F(1) to F(0). This Psychrobacter cryohalolentis (strain ATCC BAA-1226 / DSM 17306 / VKM B-2378 / K5) protein is ATP synthase subunit b.